The primary structure comprises 119 residues: Protein TusC (119 aa).

Belongs to the DsrF/TusC family. In terms of assembly, heterohexamer, formed by a dimer of trimers. The hexameric TusBCD complex contains 2 copies each of TusB, TusC and TusD. The TusBCD complex interacts with TusE.

It is found in the cytoplasm. Part of a sulfur-relay system required for 2-thiolation of 5-methylaminomethyl-2-thiouridine (mnm(5)s(2)U) at tRNA wobble positions. This Shigella boydii serotype 18 (strain CDC 3083-94 / BS512) protein is Protein TusC.